The sequence spans 105 residues: Heat shock protein HspQ (105 aa).

The protein belongs to the HspQ family.

The protein resides in the cytoplasm. Functionally, involved in the degradation of certain denaturated proteins, including DnaA, during heat shock stress. The polypeptide is Heat shock protein HspQ (Klebsiella pneumoniae (strain 342)).